Here is a 269-residue protein sequence, read N- to C-terminus: Putative pyridoxine kinase (269 aa).

An ATP-binding site is contributed by asparagine 139. Residue glutamate 142 coordinates Mg(2+). Residues 176–180 (KGGGR), aspartate 189, valine 205, glycine 214, and lysine 239 contribute to the ATP site.

Belongs to the ThiD family.

The enzyme catalyses pyridoxal + ATP = pyridoxal 5'-phosphate + ADP + H(+). Phosphorylates B6 vitamers; functions in a salvage pathway. Uses pyridoxal, pyridoxine, and pyridoxamine as substrates. This Treponema pallidum (strain Nichols) protein is Putative pyridoxine kinase (pdxK).